Reading from the N-terminus, the 434-residue chain is GTPase Obg (434 aa).

In terms of domain architecture, Obg spans 1–158 (MFLDTAKIKV…RELQLELKIL (158 aa)). Positions 159 to 336 (ADVGLVGFPS…LLDATAELLD (178 aa)) constitute an OBG-type G domain. GTP-binding positions include 165–172 (GFPSVGKS), 190–194 (FTTIV), 212–215 (DLPG), 282–285 (NKMD), and 317–319 (SGL). Positions 172 and 192 each coordinate Mg(2+). Residues 356 to 434 (GFDEEEKAFE…IGKFEFEFVD (79 aa)) enclose the OCT domain.

It belongs to the TRAFAC class OBG-HflX-like GTPase superfamily. OBG GTPase family. In terms of assembly, monomer. It depends on Mg(2+) as a cofactor.

It localises to the cytoplasm. Its function is as follows. An essential GTPase which binds GTP, GDP and possibly (p)ppGpp with moderate affinity, with high nucleotide exchange rates and a fairly low GTP hydrolysis rate. Plays a role in control of the cell cycle, stress response, ribosome biogenesis and in those bacteria that undergo differentiation, in morphogenesis control. The polypeptide is GTPase Obg (Streptococcus pneumoniae (strain ATCC 700669 / Spain 23F-1)).